Reading from the N-terminus, the 67-residue chain is DNA-directed RNA polymerase subunit omega (67 aa).

It belongs to the RNA polymerase subunit omega family. As to quaternary structure, the RNAP catalytic core consists of 2 alpha, 1 beta, 1 beta' and 1 omega subunit. When a sigma factor is associated with the core the holoenzyme is formed, which can initiate transcription.

It carries out the reaction RNA(n) + a ribonucleoside 5'-triphosphate = RNA(n+1) + diphosphate. Functionally, promotes RNA polymerase assembly. Latches the N- and C-terminal regions of the beta' subunit thereby facilitating its interaction with the beta and alpha subunits. The protein is DNA-directed RNA polymerase subunit omega of Polaromonas naphthalenivorans (strain CJ2).